A 1332-amino-acid chain; its full sequence is DEMETER-like protein 2 (1332 aa).

Residues 1 to 23 are compositionally biased toward basic and acidic residues; it reads MEVEGEVREKEARVKGRQPETEV. Disordered stretches follow at residues 1 to 29, 137 to 242, and 280 to 317; these read MEVE…GLPQ, VSTS…TSEE, and VEGS…KKTD. Over residues 137–153 the composition is skewed to polar residues; sequence VSTSTQRTEPESPQITL. Residues 223–236 show a composition bias toward low complexity; sequence SKAGIKKSSIAATA. A compositionally biased stretch (basic residues) spans 301–312; that stretch reads PKGRRGQRRSNG. The tract at residues 497-595 is DEMETER; the sequence is KVQLDPETSR…AYMDLAAEFP (99 aa). Residues 739–753 show a composition bias toward polar residues; the sequence is HQQDPESTIQTQDQQ. The disordered stretch occupies residues 739-810; that stretch reads HQQDPESTIQ…GGRKRERTER (72 aa). Over residues 763 to 777 the composition is skewed to basic residues; it reads KNRKKPTTSKPKKKS. The segment covering 787–810 has biased composition (basic and acidic residues); it reads KSVDWDSLRKEAESGGRKRERTER. The [4Fe-4S] cluster site is built by C970, C977, C980, and C986.

It belongs to the DNA glycosylase family. DEMETER subfamily. The cofactor is [4Fe-4S] cluster.

The protein resides in the nucleus. In terms of biological role, potential transcriptional activator that may act by nicking the target promoter. Catalyzes the release of 5-methylcytosine (5-meC) from DNA by a glycosylase/lyase mechanism. The sequence is that of DEMETER-like protein 2 (DML2) from Arabidopsis thaliana (Mouse-ear cress).